A 583-amino-acid chain; its full sequence is Transmembrane protein 108 (583 aa).

Residues Ala-7–Phe-27 traverse the membrane as a helical segment. An interacts with SH3GL2 region spans residues Glu-31–Pro-176. Disordered regions lie at residues Val-71–Ala-360 and Val-376–Ser-404. Composition is skewed to polar residues over residues Pro-80 to Pro-93 and Pro-100 to Thr-122. A compositionally biased stretch (low complexity) spans Gly-177–Pro-187. The interval Arg-180–Thr-413 is interacts with DST (isoform 1). Composition is skewed to polar residues over residues Tyr-251–Pro-273, Ala-310–Arg-319, and Asp-333–Gly-357. A helical transmembrane segment spans residues Ile-477–Val-497. The interaction with CYFIP2 stretch occupies residues Cys-498–Ile-583.

As to quaternary structure, interacts with DST (isoform 1). Interacts with SH3GL2. Interacts (via N-terminus) with CYFIP1 and CYFIP2; the interactions associate TMEM108 with the WAVE1 complex. Glycosylated.

The protein resides in the membrane. It is found in the postsynaptic density. Its subcellular location is the endosome membrane. The protein localises to the cell projection. It localises to the axon. The protein resides in the dendrite. It is found in the early endosome. In terms of biological role, transmembrane protein required for proper cognitive functions. Involved in the development of dentate gyrus (DG) neuron circuitry, is necessary for AMPA receptors surface expression and proper excitatory postsynaptic currents of DG granule neurons. Regulates the organization and stability of the microtubule network of sensory neurons to allow axonal transport. Through the interaction with DST, mediates the docking of the dynein/dynactin motor complex to vesicle cargos for retrograde axonal transport. In hippocampal neurons, required for BDNF-dependent dendrite outgrowth. Cooperates with SH3GL2 and recruits the WAVE1 complex to facilitate actin-dependent BDNF:NTRK2 early endocytic trafficking and mediate signaling from early endosomes. This is Transmembrane protein 108 from Bos taurus (Bovine).